The chain runs to 386 residues: ATP phosphoribosyltransferase regulatory subunit (386 aa).

The protein belongs to the class-II aminoacyl-tRNA synthetase family. HisZ subfamily. In terms of assembly, heteromultimer composed of HisG and HisZ subunits.

The protein resides in the cytoplasm. Its pathway is amino-acid biosynthesis; L-histidine biosynthesis; L-histidine from 5-phospho-alpha-D-ribose 1-diphosphate: step 1/9. Required for the first step of histidine biosynthesis. May allow the feedback regulation of ATP phosphoribosyltransferase activity by histidine. The polypeptide is ATP phosphoribosyltransferase regulatory subunit (Limosilactobacillus fermentum (strain NBRC 3956 / LMG 18251) (Lactobacillus fermentum)).